Reading from the N-terminus, the 527-residue chain is Abrin-b (527 aa).

Pyrrolidone carboxylic acid is present on Gln-1. Asn-110 carries N-linked (GlcNAc...) asparagine glycosylation. The active site involves Glu-163. 3 cysteine pairs are disulfide-bonded: Cys-246–Cys-268, Cys-285–Cys-304, and Cys-328–Cys-345. Residues Tyr-272–Gly-399 enclose the Ricin B-type lectin 1 domain. The stretch at Asn-282–Ser-324 is one 1-alpha repeat. The stretch at Asn-325–Asn-365 is one 1-beta repeat. N-linked (GlcNAc...) asparagine glycosylation is found at Asn-360 and Asn-400. Residues Ser-368–Asn-400 form a 1-gamma repeat. Residues Thr-402 to Leu-526 enclose the Ricin B-type lectin 2 domain. The stretch at Ser-413–Ser-448 is one 2-alpha repeat. Cystine bridges form between Cys-416–Cys-429 and Cys-455–Cys-472. A 2-beta repeat occupies Thr-452–Asn-491. Residues Asp-494–Phe-527 form a 2-gamma repeat.

It in the N-terminal section; belongs to the ribosome-inactivating protein family. Type 2 RIP subfamily. As to quaternary structure, disulfide-linked dimer of A and B chains.

The catalysed reaction is Endohydrolysis of the N-glycosidic bond at one specific adenosine on the 28S rRNA.. Functionally, the A chain is responsible for inhibiting protein synthesis through the catalytic inactivation of 60S ribosomal subunits by removing adenine from position 4,324 of 28S rRNA. Abrin-a is more toxic than ricin. In terms of biological role, the B chain is a galactose-specific lectin that facilitates the binding of abrin to the cell membrane that precedes endocytosis. The chain is Abrin-b from Abrus precatorius (Indian licorice).